A 314-amino-acid chain; its full sequence is ATP synthase gamma chain (314 aa).

Belongs to the ATPase gamma chain family. In terms of assembly, F-type ATPases have 2 components, CF(1) - the catalytic core - and CF(0) - the membrane proton channel. CF(1) has five subunits: alpha(3), beta(3), gamma(1), delta(1), epsilon(1). CF(0) has three main subunits: a, b and c.

It localises to the cell inner membrane. In terms of biological role, produces ATP from ADP in the presence of a proton gradient across the membrane. The gamma chain is believed to be important in regulating ATPase activity and the flow of protons through the CF(0) complex. In Gloeobacter violaceus (strain ATCC 29082 / PCC 7421), this protein is ATP synthase gamma chain.